A 765-amino-acid chain; its full sequence is Probable beta-glucosidase M (765 aa).

The signal sequence occupies residues 1–19 (MHSISALLSLLGGLALSSA). 5 N-linked (GlcNAc...) asparagine glycosylation sites follow: Asn-24, Asn-71, Asn-93, Asn-126, and Asn-258. The active site involves Asp-286. N-linked (GlcNAc...) asparagine glycosylation is found at Asn-314, Asn-321, Asn-432, Asn-519, Asn-541, and Asn-647.

The protein belongs to the glycosyl hydrolase 3 family.

The protein resides in the secreted. The enzyme catalyses Hydrolysis of terminal, non-reducing beta-D-glucosyl residues with release of beta-D-glucose.. The protein operates within glycan metabolism; cellulose degradation. In terms of biological role, beta-glucosidases are one of a number of cellulolytic enzymes involved in the degradation of cellulosic biomass. Catalyzes the last step releasing glucose from the inhibitory cellobiose. The chain is Probable beta-glucosidase M (bglM) from Aspergillus niger (strain ATCC MYA-4892 / CBS 513.88 / FGSC A1513).